Reading from the N-terminus, the 499-residue chain is Anaerobic nitric oxide reductase flavorubredoxin (499 aa).

Residues 30–210 form a zinc metallo-hydrolase region; that stretch reads TKGTSYNSYL…PFSALVTAKI (181 aa). Fe cation contacts are provided by His79, Glu81, Asp83, His147, Asp166, and His227. One can recognise a Flavodoxin-like domain in the interval 254–393; that stretch reads ITLFYDSMSN…LCREHGQFIA (140 aa). FMN contacts are provided by residues 260–264 and 342–369; these read SMSNN and AFGS…ETAV. Positions 447–498 constitute a Rubredoxin-like domain; that stretch reads KQCMLCTVCNWVYDPEIGEPNQGVEPNTAWIDVPDYFLCPECNLGKDVFVEV. Cys452, Cys455, Cys485, and Cys488 together coordinate Fe cation.

It in the N-terminal section; belongs to the zinc metallo-hydrolase group 3 family. As to quaternary structure, homotetramer. The cofactor is Fe cation. It depends on FMN as a cofactor.

Its subcellular location is the cytoplasm. It functions in the pathway nitrogen metabolism; nitric oxide reduction. Its function is as follows. Anaerobic nitric oxide reductase; uses NADH to detoxify nitric oxide (NO), protecting several 4Fe-4S NO-sensitive enzymes. Has at least 2 reductase partners, only one of which (NorW, flavorubredoxin reductase) has been identified. NO probably binds to the di-iron center; electrons enter from the NorW at rubredoxin and are transferred sequentially to the FMN center and the di-iron center. Also able to function as an aerobic oxygen reductase. This Aliivibrio salmonicida (strain LFI1238) (Vibrio salmonicida (strain LFI1238)) protein is Anaerobic nitric oxide reductase flavorubredoxin.